Reading from the N-terminus, the 320-residue chain is Polycomb complex protein BMI-1-A (320 aa).

The segment at 18–57 (CVLCGGYFIDATTIIECLHSFCKMCIVRYLETSKYCPICD) adopts an RING-type zinc-finger fold. Residues 81-95 (KLVPGLFKNEMKRRR) carry the Nuclear localization signal motif. The disordered stretch occupies residues 234 to 320 (ITHPQEGLNN…ALNGSSTSSG (87 aa)). Low complexity predominate over residues 262–281 (VPSTSSPLPSPSTLVQPSQP). Positions 285 to 304 (HISSPINGTTMTSPNRQFNF) are enriched in polar residues.

Component of a PRC1-like complex. Homodimer. Interacts with cbx2.

The protein resides in the nucleus. In terms of biological role, component of a Polycomb group (PcG) multiprotein PRC1-like complex, a complex class required to maintain the transcriptionally repressive state of many genes, including Hox genes, throughout development. PcG PRC1 complex acts via chromatin remodeling and modification of histones; it mediates monoubiquitination of histone H2A 'Lys-119', rendering chromatin heritably changed in its expressibility. In the PRC1 complex, it is required to stimulate the E3 ubiquitin-protein ligase activity of rnf2. The chain is Polycomb complex protein BMI-1-A (bmi1a) from Danio rerio (Zebrafish).